Reading from the N-terminus, the 131-residue chain is Small ribosomal subunit protein uS11 (131 aa).

This sequence belongs to the universal ribosomal protein uS11 family. As to quaternary structure, part of the 30S ribosomal subunit. Interacts with proteins S7 and S18. Binds to IF-3.

Its function is as follows. Located on the platform of the 30S subunit, it bridges several disparate RNA helices of the 16S rRNA. Forms part of the Shine-Dalgarno cleft in the 70S ribosome. The protein is Small ribosomal subunit protein uS11 of Pelobacter propionicus (strain DSM 2379 / NBRC 103807 / OttBd1).